The following is a 257-amino-acid chain: Tryptophan synthase alpha chain (257 aa).

Residues E47 and D58 each act as proton acceptor in the active site.

It belongs to the TrpA family. As to quaternary structure, tetramer of two alpha and two beta chains.

The enzyme catalyses (1S,2R)-1-C-(indol-3-yl)glycerol 3-phosphate + L-serine = D-glyceraldehyde 3-phosphate + L-tryptophan + H2O. It participates in amino-acid biosynthesis; L-tryptophan biosynthesis; L-tryptophan from chorismate: step 5/5. The alpha subunit is responsible for the aldol cleavage of indoleglycerol phosphate to indole and glyceraldehyde 3-phosphate. This Listeria innocua serovar 6a (strain ATCC BAA-680 / CLIP 11262) protein is Tryptophan synthase alpha chain.